Reading from the N-terminus, the 245-residue chain is tRNA pseudouridine synthase A 2 (245 aa).

D53 acts as the Nucleophile in catalysis. Y111 contributes to the substrate binding site.

Belongs to the tRNA pseudouridine synthase TruA family. Homodimer.

It catalyses the reaction uridine(38/39/40) in tRNA = pseudouridine(38/39/40) in tRNA. In terms of biological role, formation of pseudouridine at positions 38, 39 and 40 in the anticodon stem and loop of transfer RNAs. The protein is tRNA pseudouridine synthase A 2 of Bacillus thuringiensis subsp. konkukian (strain 97-27).